The following is a 291-amino-acid chain: Formamidopyrimidine-DNA glycosylase (291 aa).

Proline 2 functions as the Schiff-base intermediate with DNA in the catalytic mechanism. Glutamate 3 serves as the catalytic Proton donor. Catalysis depends on lysine 58, which acts as the Proton donor; for beta-elimination activity. Histidine 104, arginine 123, and lysine 166 together coordinate DNA. The FPG-type zinc-finger motif lies at lysine 257–lysine 291. Arginine 281 (proton donor; for delta-elimination activity) is an active-site residue.

The protein belongs to the FPG family. In terms of assembly, monomer. The cofactor is Zn(2+).

It carries out the reaction Hydrolysis of DNA containing ring-opened 7-methylguanine residues, releasing 2,6-diamino-4-hydroxy-5-(N-methyl)formamidopyrimidine.. The enzyme catalyses 2'-deoxyribonucleotide-(2'-deoxyribose 5'-phosphate)-2'-deoxyribonucleotide-DNA = a 3'-end 2'-deoxyribonucleotide-(2,3-dehydro-2,3-deoxyribose 5'-phosphate)-DNA + a 5'-end 5'-phospho-2'-deoxyribonucleoside-DNA + H(+). In terms of biological role, involved in base excision repair of DNA damaged by oxidation or by mutagenic agents. Acts as a DNA glycosylase that recognizes and removes damaged bases. Has a preference for oxidized purines, such as 7,8-dihydro-8-oxoguanine (8-oxoG). Has AP (apurinic/apyrimidinic) lyase activity and introduces nicks in the DNA strand. Cleaves the DNA backbone by beta-delta elimination to generate a single-strand break at the site of the removed base with both 3'- and 5'-phosphates. This Rhodopseudomonas palustris (strain TIE-1) protein is Formamidopyrimidine-DNA glycosylase.